Here is a 334-residue protein sequence, read N- to C-terminus: Formylmethanofuran--tetrahydromethanopterin formyltransferase (334 aa).

This sequence belongs to the FTR family. As to quaternary structure, homotetramer.

Its subcellular location is the cytoplasm. It catalyses the reaction N-formylmethanofuran + 5,6,7,8-tetrahydromethanopterin + H(+) = N(5)-formyl-5,6,7,8-tetrahydromethanopterin + methanofuran. It functions in the pathway one-carbon metabolism; formaldehyde degradation; formate from formaldehyde (H(4)MPT route): step 4/5. Catalyzes the transfer of a formyl group from 5-formyl tetrahydromethanopterin (5-formyl-H(4)MPT) to methanofuran (MFR) to produce formylmethanofuran (formyl-MFR) and tetrahydromethanopterin (H(4)MPT). This chain is Formylmethanofuran--tetrahydromethanopterin formyltransferase, found in Rhodopirellula baltica (strain DSM 10527 / NCIMB 13988 / SH1).